The primary structure comprises 284 residues: L-ribulose-5-phosphate 3-epimerase UlaE (284 aa).

This sequence belongs to the L-ribulose-5-phosphate 3-epimerase family.

It catalyses the reaction L-ribulose 5-phosphate = L-xylulose 5-phosphate. The protein operates within cofactor degradation; L-ascorbate degradation; D-xylulose 5-phosphate from L-ascorbate: step 3/4. Functionally, catalyzes the isomerization of L-xylulose-5-phosphate to L-ribulose-5-phosphate. Is involved in the anaerobic L-ascorbate utilization. This is L-ribulose-5-phosphate 3-epimerase UlaE from Escherichia coli O127:H6 (strain E2348/69 / EPEC).